An 823-amino-acid chain; its full sequence is Mitochondrial intermediate peptidase 2 (823 aa).

A mitochondrion-targeting transit peptide spans 1–33; sequence MRRLQQSLRRRSARRCPFILIPHRLLTTSYASY. Positions 532-553 are disordered; it reads IDGDGLPEDWDKPYGPGLEADK. Zn(2+) is bound at residue histidine 595. Glutamate 596 is an active-site residue. Histidine 599 and histidine 602 together coordinate Zn(2+).

It belongs to the peptidase M3 family. The cofactor is Zn(2+).

It is found in the mitochondrion matrix. It carries out the reaction Release of an N-terminal octapeptide as second stage of processing of some proteins imported into the mitochondrion.. Functionally, cleaves proteins, imported into the mitochondrion, to their mature size. While most mitochondrial precursor proteins are processed to the mature form in one step by mitochondrial processing peptidase (MPP), the sequential cleavage by MIP of an octapeptide after initial processing by MPP is a required step for a subgroup of nuclear-encoded precursor proteins destined for the matrix or the inner membrane. In Cryptococcus neoformans var. neoformans serotype D (strain B-3501A) (Filobasidiella neoformans), this protein is Mitochondrial intermediate peptidase 2 (OCT2).